Consider the following 208-residue polypeptide: MEVICKHYTPLDIASQAIRTCWQSFEYSDDGGCKDKELIHRVGNIFRHSSTLEHLYYNFEIKGLSRGALQELSRHRIASLSVKSSRYTLRELKEVESFLPLNETNLERAKEFLVFVDNEKVNAMSVLALENLRILLSEHNIKNDLAKYAMPESYKTHLAYSINARSLQNFLTLRSSNKALKEMQDLAKALFDALPGEHQYLFEDCLKH.

The 208-residue stretch at 1 to 208 (MEVICKHYTP…QYLFEDCLKH (208 aa)) folds into the ThyX domain. Residues S50 and 74-76 (RHR) each bind FAD. DUMP is bound by residues 71-74 (ELSR), 84-86 (SSR), and K147. The short motif at 74 to 84 (RHRIASLSVKS) is the ThyX motif element. Residues 163–165 (NAR) and N169 each bind FAD. R174 lines the dUMP pocket. The active-site Involved in ionization of N3 of dUMP, leading to its activation is R174.

The protein belongs to the thymidylate synthase ThyX family. Homotetramer. FAD serves as cofactor.

The enzyme catalyses dUMP + (6R)-5,10-methylene-5,6,7,8-tetrahydrofolate + NADPH + H(+) = dTMP + (6S)-5,6,7,8-tetrahydrofolate + NADP(+). It functions in the pathway pyrimidine metabolism; dTTP biosynthesis. Catalyzes the reductive methylation of 2'-deoxyuridine-5'-monophosphate (dUMP) to 2'-deoxythymidine-5'-monophosphate (dTMP) while utilizing 5,10-methylenetetrahydrofolate (mTHF) as the methyl donor, and NAD(P)H and FADH(2) as the reductant. This chain is Flavin-dependent thymidylate synthase, found in Helicobacter pylori (strain ATCC 700392 / 26695) (Campylobacter pylori).